The sequence spans 371 residues: Chaperone protein DnaJ (371 aa).

The J domain maps to 5-69; that stretch reads DYYEVLGLSK…QKRAQYDQFG (65 aa). Residues 133–215 form a CR-type zinc finger; the sequence is GKELNVEIPV…CHGSGKVRKR (83 aa). Zn(2+) is bound by residues C146, C149, C163, C166, C189, C192, C203, and C206. CXXCXGXG motif repeat units follow at residues 146-153, 163-170, 189-196, and 203-210; these read CDTCKGSG, CKHCSGSG, CGHCSGTG, and CTTCHGSG.

Belongs to the DnaJ family. Homodimer. Zn(2+) is required as a cofactor.

The protein resides in the cytoplasm. Functionally, participates actively in the response to hyperosmotic and heat shock by preventing the aggregation of stress-denatured proteins and by disaggregating proteins, also in an autonomous, DnaK-independent fashion. Unfolded proteins bind initially to DnaJ; upon interaction with the DnaJ-bound protein, DnaK hydrolyzes its bound ATP, resulting in the formation of a stable complex. GrpE releases ADP from DnaK; ATP binding to DnaK triggers the release of the substrate protein, thus completing the reaction cycle. Several rounds of ATP-dependent interactions between DnaJ, DnaK and GrpE are required for fully efficient folding. Also involved, together with DnaK and GrpE, in the DNA replication of plasmids through activation of initiation proteins. This is Chaperone protein DnaJ from Bacillus cereus (strain G9842).